We begin with the raw amino-acid sequence, 776 residues long: Conserved oligomeric Golgi complex subunit 4 (776 aa).

A phosphoserine mark is found at Ser342 and Ser345.

Belongs to the COG4 family. In terms of assembly, component of the conserved oligomeric Golgi complex which is composed of eight different subunits and is required for normal Golgi morphology and localization.

The protein resides in the golgi apparatus membrane. In terms of biological role, required for normal Golgi function. In Drosophila melanogaster (Fruit fly), this protein is Conserved oligomeric Golgi complex subunit 4.